The following is a 351-amino-acid chain: Dihydroorotate dehydrogenase (quinone) (351 aa).

Residues 67–71 (AGFDK) and threonine 91 each bind FMN. Substrate is bound at residue lysine 71. 116-120 (NAMGF) provides a ligand contact to substrate. FMN-binding residues include asparagine 145 and asparagine 178. Asparagine 178 provides a ligand contact to substrate. The active-site Nucleophile is the serine 181. A substrate-binding site is contributed by asparagine 183. Residues lysine 214 and threonine 242 each coordinate FMN. Position 243 to 244 (243 to 244 (NT)) interacts with substrate. Residues glycine 262, glycine 291, and 312 to 313 (YS) contribute to the FMN site.

This sequence belongs to the dihydroorotate dehydrogenase family. Type 2 subfamily. As to quaternary structure, monomer. Requires FMN as cofactor.

Its subcellular location is the cell membrane. The catalysed reaction is (S)-dihydroorotate + a quinone = orotate + a quinol. It participates in pyrimidine metabolism; UMP biosynthesis via de novo pathway; orotate from (S)-dihydroorotate (quinone route): step 1/1. Its function is as follows. Catalyzes the conversion of dihydroorotate to orotate with quinone as electron acceptor. This chain is Dihydroorotate dehydrogenase (quinone), found in Helicobacter acinonychis (strain Sheeba).